We begin with the raw amino-acid sequence, 435 residues long: Eukaryotic translation initiation factor 3 subunit E (435 aa).

In terms of domain architecture, PCI spans 219 to 392 (FFNHPKGRDL…GHVVMGTQPL (174 aa)).

It belongs to the eIF-3 subunit E family. As to quaternary structure, component of the eukaryotic translation initiation factor 3 (eIF-3) complex. The eIF-3 complex interacts with pix. Interacts with mxt.

Its subcellular location is the cytoplasm. Its function is as follows. Component of the eukaryotic translation initiation factor 3 (eIF-3) complex, which is involved in protein synthesis of a specialized repertoire of mRNAs and, together with other initiation factors, stimulates binding of mRNA and methionyl-tRNAi to the 40S ribosome. The eIF-3 complex specifically targets and initiates translation of a subset of mRNAs involved in cell proliferation. In Drosophila erecta (Fruit fly), this protein is Eukaryotic translation initiation factor 3 subunit E (eIF3-S6).